We begin with the raw amino-acid sequence, 214 residues long: uncharacterized protein (214 aa).

The signal sequence occupies residues 1-15; sequence MRPLILSIFALFLAG. Cys16 carries the N-palmitoyl cysteine lipid modification. A lipid anchor (S-diacylglycerol cysteine) is attached at Cys16.

It to E.coli YjbF.

Its subcellular location is the cell membrane. This is an uncharacterized protein from Escherichia coli (strain K12).